The chain runs to 719 residues: Disintegrin and metalloproteinase domain-containing protein 18 (719 aa).

Residues 1-19 (MPLLFILAELAMLFARLDS) form the signal peptide. Positions 20–179 (EGICLHITVP…QDKNHSQLLP (160 aa)) are excised as a propeptide. N-linked (GlcNAc...) asparagine glycans are attached at residues Asn61, Asn75, Asn121, Asn152, Asn173, Asn244, and Asn331. At 173 to 683 (NHSQLLPQSL…TKRLSKNEDS (511 aa)) the chain is on the extracellular side. Residues 180–378 (QSLKLHIIVG…FDTQCLGDLS (199 aa)) enclose the Peptidase M12B domain. 3 disulfides stabilise this stretch: Cys289-Cys373, Cys332-Cys357, and Cys334-Cys339. 2 N-linked (GlcNAc...) asparagine glycosylation sites follow: Asn356 and Asn405. A Disintegrin domain is found at 387 to 476 (QAVCGNGIME…HCVPDTFALN (90 aa)). A disulfide bridge links Cys447 with Cys468. N-linked (GlcNAc...) asparagine glycans are attached at residues Asn607, Asn614, and Asn621. Residues 616–650 (TGNDCNATKKCKGNGICNNFGNCQCFPDYRPPDCN) enclose the EGF-like domain. Disulfide bonds link Cys620–Cys632, Cys626–Cys638, and Cys640–Cys649. A helical transmembrane segment spans residues 684 to 704 (WVILGFFIFLPFIVTFLVGIM). Residues 705–719 (KRNERKIVPQGEHKI) lie on the Cytoplasmic side of the membrane.

In terms of processing, the prodomain and the metalloprotease-like domain are cleaved during the epididymal maturation of the spermatozoa. As to expression, expressed specifically in testis.

It localises to the membrane. In terms of biological role, sperm surface membrane protein that may be involved in spermatogenesis and fertilization. This is a non catalytic metalloprotease-like protein. This Mus musculus (Mouse) protein is Disintegrin and metalloproteinase domain-containing protein 18 (Adam18).